Consider the following 296-residue polypeptide: Fructose-bisphosphate aldolase class 1 (296 aa).

Glutamate 175 acts as the Proton acceptor in catalysis. Lysine 212 serves as the catalytic Schiff-base intermediate with dihydroxyacetone-P.

Belongs to the class I fructose-bisphosphate aldolase family.

It catalyses the reaction beta-D-fructose 1,6-bisphosphate = D-glyceraldehyde 3-phosphate + dihydroxyacetone phosphate. Its pathway is carbohydrate degradation; glycolysis; D-glyceraldehyde 3-phosphate and glycerone phosphate from D-glucose: step 4/4. This chain is Fructose-bisphosphate aldolase class 1, found in Staphylococcus aureus (strain MSSA476).